We begin with the raw amino-acid sequence, 359 residues long: Very-long-chain (3R)-3-hydroxyacyl-CoA dehydratase (359 aa).

The Cytoplasmic segment spans residues 1–144 (MSALTPHVYW…RKDPFLGLKK (144 aa)). The CS domain occupies 3–92 (ALTPHVYWAQ…QEEVWWNRLT (90 aa)). Residues 109–133 (LDESDAEMELREKEEKINKVSFESR) adopt a coiled-coil conformation. Residues 145-165 (GFLFMYNLVQFLGYSWIFVNM) form a helical membrane-spanning segment. Residues 166-186 (TVRLFILGQDSFYDTFHTIAD) lie on the Lumenal side of the membrane. A helical transmembrane segment spans residues 187–207 (VMYFCQMLAIMEVINPAVGLV). At 208–209 (KT) the chain is on the cytoplasmic side. A helical transmembrane segment spans residues 210–230 (GVMPAFIQVMGRNFILFVIFG). Over 231-239 (SLEDMQNKP) the chain is Lumenal. A helical membrane pass occupies residues 240–260 (VVFFVFYLWSTIEIFRYPFYM). The Cytoplasmic portion of the chain corresponds to 261–277 (LACIDTEWKLLTWLRYT). A helical transmembrane segment spans residues 278–298 (IWMPLYPLGVLAEAVAVIQSI). Residues tyrosine 283 and glutamate 290 contribute to the active site. Over 299 to 317 (PIFDETKLLSIPLPKATGL) the chain is Lumenal. A helical membrane pass occupies residues 318 to 338 (SLSFSYILQLYLVVMFLGLFI). Residues 339-359 (NFRHLFKQRTRRFRTKKRKAN) are Cytoplasmic-facing.

Belongs to the very long-chain fatty acids dehydratase HACD family.

The protein localises to the endoplasmic reticulum membrane. It carries out the reaction a very-long-chain (3R)-3-hydroxyacyl-CoA = a very-long-chain (2E)-enoyl-CoA + H2O. The enzyme catalyses (3R)-hydroxyhexadecanoyl-CoA = (2E)-hexadecenoyl-CoA + H2O. It functions in the pathway lipid metabolism; fatty acid biosynthesis. Its function is as follows. Catalyzes the third of the four reactions of the long-chain fatty acids elongation cycle. This endoplasmic reticulum-bound enzymatic process, allows the addition of two carbons to the chain of long- and very long-chain fatty acids/VLCFAs per cycle. This enzyme catalyzes the dehydration of the 3-hydroxyacyl-CoA intermediate into trans-2,3-enoyl-CoA, within each cycle of fatty acid elongation. Thereby, it participates in the production of VLCFAs of different chain lengths that are involved in multiple biological processes as precursors of membrane lipids and lipid mediators. Involved in Rac1-signaling pathways leading to the modulation of gene expression. The sequence is that of Very-long-chain (3R)-3-hydroxyacyl-CoA dehydratase from Danio rerio (Zebrafish).